A 66-amino-acid chain; its full sequence is Conotoxin PnMLCL-01 (66 aa).

Residues 1–19 (MLCLPVFIILLLLASPAAS) form the signal peptide. Residues 20–45 (NPLEKRIQSDLIRAALEDADTKNDPR) constitute a propeptide that is removed on maturation. Position 63 is a cysteine amide (cysteine 63).

The protein belongs to the conotoxin T superfamily. Contains 2 disulfide bonds that can be either 'C1-C3, C2-C4' or 'C1-C4, C2-C3', since these disulfide connectivities have been observed for conotoxins with cysteine framework V (for examples, see AC P0DQQ7 and AC P81755). In terms of tissue distribution, expressed by the venom duct.

The protein localises to the secreted. The chain is Conotoxin PnMLCL-01 from Conus pennaceus (Feathered cone).